A 743-amino-acid polypeptide reads, in one-letter code: Polyribonucleotide nucleotidyltransferase (743 aa).

Positions 494 and 500 each coordinate Mg(2+). Residues Pro-561–Val-620 form the KH domain. The region spanning Gly-630–Gln-704 is the S1 motif domain. Residues Glu-702–Arg-743 are disordered. Residues Asp-712 to Arg-743 show a composition bias toward basic and acidic residues.

The protein belongs to the polyribonucleotide nucleotidyltransferase family. Mg(2+) serves as cofactor.

Its subcellular location is the cytoplasm. The catalysed reaction is RNA(n+1) + phosphate = RNA(n) + a ribonucleoside 5'-diphosphate. Involved in mRNA degradation. Catalyzes the phosphorolysis of single-stranded polyribonucleotides processively in the 3'- to 5'-direction. The sequence is that of Polyribonucleotide nucleotidyltransferase from Desulfovibrio desulfuricans (strain ATCC 27774 / DSM 6949 / MB).